The chain runs to 220 residues: MSRSGKDPGKRVKTARKRSASSTRWLERQLNDPYVKQAKADGYRSRAAYKLIELDGKFGILKGASRVVDLGIAPGGWAQVVRKVRPKAGIVGIDLLETEPIEGVTILQMDFMADEAPAGLEAALDGPPDLVMSDMAANTVGHKQTDHLRTMGLVEAAAWFAIETLEEGGTFLAKVLAGGTDNDLLKLLKSHFKTVKHAKPPASRKGSSEWYVVAQGFKGR.

Positions 1-10 are enriched in basic and acidic residues; it reads MSRSGKDPGK. The interval 1 to 24 is disordered; the sequence is MSRSGKDPGKRVKTARKRSASSTR. The S-adenosyl-L-methionine site is built by Gly75, Trp77, Asp94, Asp110, and Asp134. Residue Lys174 is the Proton acceptor of the active site.

The protein belongs to the class I-like SAM-binding methyltransferase superfamily. RNA methyltransferase RlmE family.

Its subcellular location is the cytoplasm. It carries out the reaction uridine(2552) in 23S rRNA + S-adenosyl-L-methionine = 2'-O-methyluridine(2552) in 23S rRNA + S-adenosyl-L-homocysteine + H(+). Functionally, specifically methylates the uridine in position 2552 of 23S rRNA at the 2'-O position of the ribose in the fully assembled 50S ribosomal subunit. This chain is Ribosomal RNA large subunit methyltransferase E, found in Erythrobacter litoralis (strain HTCC2594).